Consider the following 255-residue polypeptide: MDSPCTSESIYNLIPSDLKEPPQHPRYTSLFRATIKNDMKKFKTAMKTMGPAKVEIPSPKDFLKKHSKEKTLPPKKKFNRCSPKKPAVPLRTDHPVMGIQSGKNFINTNAADVIMGVAKKPKPIYVDKRTGDKHDLETSGLFPKYINKKDYGITPEYICKRNEDVKKAQEEYDNYIQENLKKAAMKRLSDEEREAVLQGLKKNWEEVHKEFQSLSVFIDSVPKKIRKQKLEKEMKQLEHDISVIEKHKIIYIANK.

A compositionally biased stretch (polar residues) spans 1 to 10 (MDSPCTSESI). Disordered stretches follow at residues 1–25 (MDSPCTSESIYNLIPSDLKEPPQHP) and 67–96 (SKEKTLPPKKKFNRCSPKKPAVPLRTDHPV). Positions 73 to 83 (PPKKKFNRCSP) are enriched in basic residues. Positions 83–89 (PKKPAVP) match the SH3-binding motif. The Enkurin domain occupies 160-252 (KRNEDVKKAQ…VIEKHKIIYI (93 aa)). Residues 160-255 (KRNEDVKKAQ…KHKIIYIANK (96 aa)) form an interaction with TRPC proteins region. Residues 176–187 (IQENLKKAAMKR) enclose the IQ domain.

As to quaternary structure, microtubule inner protein component of sperm flagellar doublet microtubules. Binds calmodulin via its IQ domain. Interacts with TRPC1, TRPC2, TRPC5, but not TRPC3. Interacts with CFAP45. In terms of tissue distribution, high expression in testis and vomeronasal organ and lower expression in ovary, heart, lung, and brain. Not expressed in other tissues.

The protein localises to the cytoplasm. It is found in the cytoskeleton. The protein resides in the cilium axoneme. It localises to the flagellum axoneme. Functionally, adapter that functions to localize a calcium-sensitive signal transduction machinery in sperm to a calcium-permeable ion channel. Microtubule inner protein (MIP) part of the dynein-decorated doublet microtubules (DMTs) in cilia axoneme, which is required for motile cilia beating. This is Enkurin (Enkur) from Mus musculus (Mouse).